The following is a 180-amino-acid chain: Major urinary protein 6 (180 aa).

A signal peptide spans 1-18 (MKMLLLLCLGLTLVCVHA). A disulfide bond links C82 and C175.

The protein belongs to the calycin superfamily. Lipocalin family. As to expression, abundant in the urine of adult male mice but absent from that of females.

The protein localises to the secreted. In terms of biological role, binds pheromones that are released from drying urine of males. These pheromones affect the sexual behavior of females. The chain is Major urinary protein 6 (Mup6) from Mus musculus (Mouse).